The sequence spans 1088 residues: Neural cell adhesion molecule 1-A (1088 aa).

A signal peptide spans 1–19 (MLHIKDLIWTLYFIGTAVA). 5 Ig-like C2-type domains span residues 20–108 (LEVN…GTVN), 113–202 (QKLT…KDIQ), 209–294 (PTIQ…AEAT), 303–397 (PKIT…FEVQ), and 400–484 (PKIR…HEFS). Residues 20-705 (LEVNIVPDQG…TASAGTGLGT (686 aa)) lie on the Extracellular side of the membrane. 2 cysteine pairs are disulfide-bonded: Cys41-Cys93 and Cys136-Cys186. N-linked (GlcNAc...) asparagine glycosylation is present at Asn82. Heparin is bound by residues 149–153 (RHKGK) and 158–162 (KKDVR). Asn219 carries N-linked (GlcNAc...) asparagine glycosylation. A disulfide bridge links Cys232 with Cys282. N-linked (GlcNAc...) asparagine glycans are attached at residues Asn310, Asn341, Asn417, Asn443, and Asn472. Cysteines 323 and 379 form a disulfide. Residues Cys420 and Cys473 are joined by a disulfide bond. Fibronectin type-III domains are found at residues 493 to 592 (TPSS…TQPV) and 594 to 690 (EPSA…TAKP). A helical transmembrane segment spans residues 706–723 (GAIVGILIVIFVLLLVVV). The Cytoplasmic portion of the chain corresponds to 724–1088 (DVTCFFLNKC…TQTNANESKA (365 aa)). Over residues 758–784 (EGKAAFSKDESKEPIVEVRTEEERTPN) the composition is skewed to basic and acidic residues. 3 disordered regions span residues 758–802 (EGKA…LTEP), 829–1000 (FATA…DGGT), and 1024–1088 (VASG…ESKA). Low complexity-rich tracts occupy residues 835–847 (SPTSETTTLTSST), 854–875 (APDSNTIQSIQATPSKAEAPTT), and 913–936 (PSAATSAAEPPTVIIKPVTTVPPN). A compositionally biased stretch (polar residues) spans 965 to 974 (QPSTVKNPTE). Positions 1046-1064 (AKTEKTQVEEKSKPEEIDV) are enriched in basic and acidic residues. The span at 1076 to 1088 (NEATQTNANESKA) shows a compositional bias: polar residues.

Polysialylated by ST8SIA2 and ST8SIA4. Polysialylation modulates cell interactions by confering both attractive and repulsive properties that are highly regulated by ST8SIA2 and ST8SIA4. Polysialylation is formed on a-2,3-linked sialic acid of core glycans. In terms of tissue distribution, expressed in neuron and in presumptive neural tissue.

The protein localises to the cell membrane. Functionally, this protein is a cell adhesion molecule involved in neuron-neuron adhesion, neurite fasciculation, outgrowth of neurites, etc. In Xenopus laevis (African clawed frog), this protein is Neural cell adhesion molecule 1-A.